The chain runs to 230 residues: 5'-methylthioadenosine/S-adenosylhomocysteine nucleosidase (230 aa).

The Proton acceptor role is filled by Glu12. Substrate-binding positions include Gly78, Ile153, and 174–175 (ME). Asp198 (proton donor) is an active-site residue.

This sequence belongs to the PNP/UDP phosphorylase family. MtnN subfamily.

It catalyses the reaction S-adenosyl-L-homocysteine + H2O = S-(5-deoxy-D-ribos-5-yl)-L-homocysteine + adenine. The catalysed reaction is S-methyl-5'-thioadenosine + H2O = 5-(methylsulfanyl)-D-ribose + adenine. The enzyme catalyses 5'-deoxyadenosine + H2O = 5-deoxy-D-ribose + adenine. Its pathway is amino-acid biosynthesis; L-methionine biosynthesis via salvage pathway; S-methyl-5-thio-alpha-D-ribose 1-phosphate from S-methyl-5'-thioadenosine (hydrolase route): step 1/2. In terms of biological role, catalyzes the irreversible cleavage of the glycosidic bond in both 5'-methylthioadenosine (MTA) and S-adenosylhomocysteine (SAH/AdoHcy) to adenine and the corresponding thioribose, 5'-methylthioribose and S-ribosylhomocysteine, respectively. Also cleaves 5'-deoxyadenosine, a toxic by-product of radical S-adenosylmethionine (SAM) enzymes, into 5-deoxyribose and adenine. This is 5'-methylthioadenosine/S-adenosylhomocysteine nucleosidase from Shewanella piezotolerans (strain WP3 / JCM 13877).